Here is a 427-residue protein sequence, read N- to C-terminus: MHYLDISFTYKNTDISVREKLAFDSDEKKEQILKLINSNKNIKESMVLNTCNRVEIIASVEDVKAATAHIIRCMSIFSGVFEDELYERADIYENSGAAHHLFAVASSLDSLVVGETQIVGQLKNAFKFAYDNNSCGEDISKIIHYACKCAAKVRNETQISKNPISVSSVAVAKAKEIFGTLEGKTAIVVGAGEMGELAAKHLISSGAEVIIINRSSERVEQLVDSLGDNASWDSILKLKEYVNNYDLIFSSTAAPHAIITGEIIEPREFHRYFFDIAVPRDIDLLNTELISVYTVDSLEEIVRKNLALREEQAQKAYSIVGQDTSEFLKTLKEDMSVPLIKSIRKQAEICAKNELEKAIKKGYLKHSDYDEAQKLIHQVFKAFLHQPTMKLKGLADEERASELSNGVKFLFDIKDEQNFQAGDIDEI.

Residues 50–53, Ser-110, 115–117, and Gln-121 each bind substrate; these read TCNR and ETQ. Cys-51 acts as the Nucleophile in catalysis. Position 190–195 (190–195) interacts with NADP(+); it reads GAGEMG.

It belongs to the glutamyl-tRNA reductase family. Homodimer.

The enzyme catalyses (S)-4-amino-5-oxopentanoate + tRNA(Glu) + NADP(+) = L-glutamyl-tRNA(Glu) + NADPH + H(+). It functions in the pathway porphyrin-containing compound metabolism; protoporphyrin-IX biosynthesis; 5-aminolevulinate from L-glutamyl-tRNA(Glu): step 1/2. Functionally, catalyzes the NADPH-dependent reduction of glutamyl-tRNA(Glu) to glutamate 1-semialdehyde (GSA). This Campylobacter concisus (strain 13826) protein is Glutamyl-tRNA reductase.